The chain runs to 225 residues: Urease accessory protein UreE (225 aa).

Residues 171-215 are compositionally biased toward basic and acidic residues; the sequence is HHGHEHSHDHEHGHSHAAHEHSHGHDHTHGHDHDHGDHVHDESCG. Positions 171-225 are disordered; that stretch reads HHGHEHSHDHEHGHSHAAHEHSHGHDHTHGHDHDHGDHVHDESCGHGHHHHHAHR. Over residues 216–225 the composition is skewed to basic residues; sequence HGHHHHHAHR.

Belongs to the UreE family.

The protein localises to the cytoplasm. Its function is as follows. Involved in urease metallocenter assembly. Binds nickel. Probably functions as a nickel donor during metallocenter assembly. In Paraburkholderia xenovorans (strain LB400), this protein is Urease accessory protein UreE.